The sequence spans 354 residues: Serine/threonine-protein kinase-transforming protein mos (354 aa).

The Protein kinase domain maps to 74 to 350 (VCLMHRLGSG…LLQRDLKAFR (277 aa)). ATP is bound by residues 80–88 (LGSGGFGSV) and Lys-101. The active-site Proton acceptor is Asp-209.

This sequence belongs to the protein kinase superfamily. Ser/Thr protein kinase family.

The enzyme catalyses L-seryl-[protein] + ATP = O-phospho-L-seryl-[protein] + ADP + H(+). The catalysed reaction is L-threonyl-[protein] + ATP = O-phospho-L-threonyl-[protein] + ADP + H(+). In Moloney murine sarcoma virus (strain ts110) (MoMSV), this protein is Serine/threonine-protein kinase-transforming protein mos (V-MOS).